The chain runs to 443 residues: Transcriptional adapter 2-alpha (443 aa).

S6 is subject to Phosphoserine. The ZZ-type zinc finger occupies 12 to 69 (SDKPPCRGCSSYLMEPYIKCAECGPPPFFLCLQCFTRGFEYKKHQSDHTYEIMTSDFP). Zn(2+) contacts are provided by C17, C20, C31, C34, C42, C45, H55, and H59. In terms of domain architecture, SANT spans 70–122 (VLDPSWTAQEEMALLEAVMDCGFGNWQDVANQMCTKTKEECEKHYMKHFINNP). Residues K132 and K138 each participate in a glycyl lysine isopeptide (Lys-Gly) (interchain with G-Cter in SUMO2) cross-link. The SWIRM domain occupies 356-443 (NSGRRSAPPL…LIREGYITKA (88 aa)). A DNA-binding region spans residues 426–435 (KTRKIYDFLI).

In terms of assembly, interacts with GCN5 and NR3C1. Associated with the P/CAF protein in the PCAF complex. Component of the PCAF complex, at least composed of TADA2L/ADA2, TADA3L/ADA3, TAF5L/PAF65-beta, TAF6L/PAF65-alpha, TAF10/TAFII30, TAF12/TAFII20, TAF9/TAFII31 and TRRAP. Component of the ADA2A-containing complex (ATAC), composed of KAT14, KAT2A, TADA2L, TADA3L, ZZ3, MBIP, WDR5, YEATS2, CCDC101 and DR1. Interacts with CCDC134.

Its subcellular location is the nucleus. The protein resides in the chromosome. Functionally, component of the ATAC complex, a complex with histone acetyltransferase activity on histones H3 and H4. Required for the function of some acidic activation domains, which activate transcription from a distant site. Binds double-stranded DNA. Binds dinucleosomes, probably at the linker region between neighboring nucleosomes. Plays a role in chromatin remodeling. May promote TP53/p53 'Lys-321' acetylation, leading to reduced TP53 stability and transcriptional activity. May also promote XRCC6 acetylation thus facilitating cell apoptosis in response to DNA damage. This chain is Transcriptional adapter 2-alpha (Tada2a), found in Rattus norvegicus (Rat).